Here is a 199-residue protein sequence, read N- to C-terminus: Stress response protein SCP2 (199 aa).

This sequence belongs to the CAPAB/TerDEXZ family.

It localises to the cytoplasm. This chain is Stress response protein SCP2 (yceC), found in Bacillus subtilis (strain 168).